A 169-amino-acid polypeptide reads, in one-letter code: Superoxide dismutase [Cu-Zn] 1 (169 aa).

The N-terminal stretch at 1–18 (MFEQWDALCAVLFSFSIA) is a signal peptide. 3 residues coordinate Cu cation: His65, His67, and His83. An intrachain disulfide couples Cys72 to Cys165. Residues His83, His91, His100, and Asp103 each coordinate Zn(2+). His145 serves as a coordination point for Cu cation.

It belongs to the Cu-Zn superoxide dismutase family. Cu cation is required as a cofactor. The cofactor is Zn(2+).

It catalyses the reaction 2 superoxide + 2 H(+) = H2O2 + O2. Functionally, destroys radicals which are normally produced within the cells and which are toxic to biological systems. This Aquifex aeolicus (strain VF5) protein is Superoxide dismutase [Cu-Zn] 1 (sodC1).